Reading from the N-terminus, the 359-residue chain is Isopentenyl-diphosphate delta-isomerase (359 aa).

11–12 (RK) provides a ligand contact to substrate. Residues Ser68, 69–71 (GMT), Ser99, and Asn127 each bind FMN. Residue 99–101 (SQR) coordinates substrate. Gln163 contacts substrate. Residue Glu164 coordinates Mg(2+). FMN contacts are provided by residues Lys199, Thr229, 278–280 (GIR), and 299–300 (AL).

The protein belongs to the IPP isomerase type 2 family. As to quaternary structure, homooctamer. Dimer of tetramers. FMN is required as a cofactor. It depends on NADPH as a cofactor. The cofactor is Mg(2+).

The protein resides in the cytoplasm. It carries out the reaction isopentenyl diphosphate = dimethylallyl diphosphate. Inhibited by 3,4-epoxy-3-methylbutyl diphosphate (EIPP). In terms of biological role, involved in the biosynthesis of isoprenoids. Catalyzes the 1,3-allylic rearrangement of the homoallylic substrate isopentenyl (IPP) to its allylic isomer, dimethylallyl diphosphate (DMAPP). In Methanocaldococcus jannaschii (strain ATCC 43067 / DSM 2661 / JAL-1 / JCM 10045 / NBRC 100440) (Methanococcus jannaschii), this protein is Isopentenyl-diphosphate delta-isomerase.